The chain runs to 130 residues: Large ribosomal subunit protein bL12 (130 aa).

The protein belongs to the bacterial ribosomal protein bL12 family. In terms of assembly, homodimer. Part of the ribosomal stalk of the 50S ribosomal subunit. Forms a multimeric L10(L12)X complex, where L10 forms an elongated spine to which 2 to 4 L12 dimers bind in a sequential fashion. Binds GTP-bound translation factors.

In terms of biological role, forms part of the ribosomal stalk which helps the ribosome interact with GTP-bound translation factors. Is thus essential for accurate translation. The chain is Large ribosomal subunit protein bL12 from Mycolicibacterium gilvum (strain PYR-GCK) (Mycobacterium gilvum (strain PYR-GCK)).